The chain runs to 200 residues: 3-isopropylmalate dehydratase small subunit (200 aa).

Belongs to the LeuD family. LeuD type 1 subfamily. Heterodimer of LeuC and LeuD.

The enzyme catalyses (2R,3S)-3-isopropylmalate = (2S)-2-isopropylmalate. It participates in amino-acid biosynthesis; L-leucine biosynthesis; L-leucine from 3-methyl-2-oxobutanoate: step 2/4. Functionally, catalyzes the isomerization between 2-isopropylmalate and 3-isopropylmalate, via the formation of 2-isopropylmaleate. The chain is 3-isopropylmalate dehydratase small subunit from Vibrio vulnificus (strain CMCP6).